The following is a 666-amino-acid chain: Zinc finger MYM-type protein 5 (666 aa).

Glycyl lysine isopeptide (Lys-Gly) (interchain with G-Cter in SUMO2) cross-links involve residues lysine 85, lysine 88, lysine 146, and lysine 163. The interval 87–106 is disordered; sequence EKPQGNYSVIPPPSRDLASQ. The disordered stretch occupies residues 191 to 212; sequence SPDSWISQSASFPRNQKQPGVD. Residues 194–208 show a composition bias toward polar residues; sequence SWISQSASFPRNQKQ. A Glycyl lysine isopeptide (Lys-Gly) (interchain with G-Cter in SUMO2) cross-link involves residue lysine 222. 4 MYM-type zinc fingers span residues 262 to 296, 308 to 348, 355 to 390, and 401 to 428; these read HLFCCTTCLSSFSHKRTQNTRSVICKKFASTKKAD, QEFC…RHEV, HKLCSNHCFNKYRLANGLIMNCCEHCGEYMPSKSTG, and KRFCCQSCINEYKQMMETKSKKLTASEN. Residues lysine 440, lysine 452, lysine 459, and lysine 549 each participate in a glycyl lysine isopeptide (Lys-Gly) (interchain with G-Cter in SUMO2) cross-link.

As to quaternary structure, interacts (via N-terminal 120 amino acid region) with ETV5 (via C-terminal).

The protein localises to the nucleus. Functions as a transcriptional regulator. In Macaca fascicularis (Crab-eating macaque), this protein is Zinc finger MYM-type protein 5 (ZMYM5).